Here is a 217-residue protein sequence, read N- to C-terminus: Thiamine-phosphate synthase (217 aa).

Residues 39–43 (QLRRK) and Asn71 contribute to the 4-amino-2-methyl-5-(diphosphooxymethyl)pyrimidine site. Mg(2+) contacts are provided by Asp72 and Asp91. Residue Ser110 participates in 4-amino-2-methyl-5-(diphosphooxymethyl)pyrimidine binding. 137–139 (SPT) contributes to the 2-[(2R,5Z)-2-carboxy-4-methylthiazol-5(2H)-ylidene]ethyl phosphate binding site. Lys140 is a 4-amino-2-methyl-5-(diphosphooxymethyl)pyrimidine binding site. 2-[(2R,5Z)-2-carboxy-4-methylthiazol-5(2H)-ylidene]ethyl phosphate contacts are provided by residues Gly173 and 193 to 194 (IS).

Belongs to the thiamine-phosphate synthase family. Mg(2+) serves as cofactor.

It catalyses the reaction 2-[(2R,5Z)-2-carboxy-4-methylthiazol-5(2H)-ylidene]ethyl phosphate + 4-amino-2-methyl-5-(diphosphooxymethyl)pyrimidine + 2 H(+) = thiamine phosphate + CO2 + diphosphate. It carries out the reaction 2-(2-carboxy-4-methylthiazol-5-yl)ethyl phosphate + 4-amino-2-methyl-5-(diphosphooxymethyl)pyrimidine + 2 H(+) = thiamine phosphate + CO2 + diphosphate. The catalysed reaction is 4-methyl-5-(2-phosphooxyethyl)-thiazole + 4-amino-2-methyl-5-(diphosphooxymethyl)pyrimidine + H(+) = thiamine phosphate + diphosphate. The protein operates within cofactor biosynthesis; thiamine diphosphate biosynthesis; thiamine phosphate from 4-amino-2-methyl-5-diphosphomethylpyrimidine and 4-methyl-5-(2-phosphoethyl)-thiazole: step 1/1. Functionally, condenses 4-methyl-5-(beta-hydroxyethyl)thiazole monophosphate (THZ-P) and 2-methyl-4-amino-5-hydroxymethyl pyrimidine pyrophosphate (HMP-PP) to form thiamine monophosphate (TMP). The polypeptide is Thiamine-phosphate synthase (Bordetella parapertussis (strain 12822 / ATCC BAA-587 / NCTC 13253)).